Here is a 254-residue protein sequence, read N- to C-terminus: Alcohol dehydrogenase (254 aa).

Residue 10-33 participates in NAD(+) binding; the sequence is FVAGLGGIGLDTSREIVKSGPKNL. Ser138 contacts substrate. Tyr151 serves as the catalytic Proton acceptor.

This sequence belongs to the short-chain dehydrogenases/reductases (SDR) family. Homodimer.

It carries out the reaction a primary alcohol + NAD(+) = an aldehyde + NADH + H(+). It catalyses the reaction a secondary alcohol + NAD(+) = a ketone + NADH + H(+). The sequence is that of Alcohol dehydrogenase (Adh) from Drosophila mimica (Fruit fly).